The chain runs to 529 residues: DEP domain-containing protein 1B (529 aa).

Residues Phe24–Pro108 form the DEP domain. Ser160 is modified (phosphoserine). The region spanning Asp201 to Leu393 is the Rho-GAP domain. Ser436 bears the Phosphoserine mark.

This Homo sapiens (Human) protein is DEP domain-containing protein 1B (DEPDC1B).